A 169-amino-acid polypeptide reads, in one-letter code: Large ribosomal subunit protein uL23 (169 aa).

The interval M1–S20 is disordered. A compositionally biased stretch (polar residues) spans S8–S20.

The protein belongs to the universal ribosomal protein uL23 family.

In terms of biological role, this protein binds to a specific region on the 26S rRNA. The polypeptide is Large ribosomal subunit protein uL23 (rpl23a) (Dictyostelium discoideum (Social amoeba)).